The following is a 435-amino-acid chain: rRNA methyltransferase 3A, mitochondrial (435 aa).

The N-terminal 42 residues, 1–42, are a transit peptide targeting the mitochondrion; it reads MAALMYNVSRGLVMLGERSLFQRERYQILVNSRRFLRGLRRR. Polar residues predominate over residues 314–324; that stretch reads KQLVSGQTENV. Residues 314–351 form a disordered region; it reads KQLVSGQTENVSSDDYSESDSDDDDDEEEDEDSLPHVK. A compositionally biased stretch (acidic residues) spans 328-345; it reads DYSESDSDDDDDEEEDED. S-adenosyl-L-methionine is bound by residues Gly-369 and Leu-402.

Belongs to the class IV-like SAM-binding methyltransferase superfamily. RNA methyltransferase TrmH family.

The protein resides in the mitochondrion. The enzyme catalyses a uridine in rRNA + S-adenosyl-L-methionine = a 2'-O-methyluridine in rRNA + S-adenosyl-L-homocysteine + H(+). Its function is as follows. S-adenosyl-L-methionine-dependent 2'-O-ribose methyltransferase that catalyzes the formation of 2'-O-methylguanosine at position 1485 (Gm1485) in the mitochondrial large subunit ribosomal RNA (mtLSU rRNA), a conserved modification in the peptidyl transferase domain of the mtLSU rRNA. Also required for formation of 2'-O-methyluridine at position 1484 (Um1484) mediated by MRM2. The polypeptide is rRNA methyltransferase 3A, mitochondrial (mrm3a) (Danio rerio (Zebrafish)).